A 218-amino-acid polypeptide reads, in one-letter code: uncharacterized protein (218 aa).

An N-terminal signal peptide occupies residues 1–17 (MLKKIIILFLGIFLLSS). Residue Cys-18 is the site of N-palmitoyl cysteine attachment. The S-diacylglycerol cysteine moiety is linked to residue Cys-18. A coiled-coil region spans residues 136 to 164 (YKEKKIEEELNQIKAMLKETKRDITKYTC).

It localises to the cell membrane. This is an uncharacterized protein from Rickettsia typhi (strain ATCC VR-144 / Wilmington).